A 271-amino-acid chain; its full sequence is Proteasome inhibitor PI31 subunit (271 aa).

Ala2 carries the N-acetylalanine modification. Positions 2 to 150 are important for homodimerization and interaction with FBXO7; the sequence is AGLEVLFASA…PIHEQWEKAN (149 aa). Position 153 is a phosphoserine (Ser153). Residue Arg205 is modified to Omega-N-methylarginine. Residue Arg219 is modified to Asymmetric dimethylarginine. The segment at 222–271 is disordered; the sequence is IDPSSGLPNRLPPGAVPPGARFDPFGPIGTSPPGPNPDHLPPPGYDDMYL. An Omega-N-methylarginine modification is found at Arg231. Residues 251 to 265 are compositionally biased toward pro residues; the sequence is TSPPGPNPDHLPPPG. Ser252 carries the phosphoserine modification.

This sequence belongs to the proteasome inhibitor PI31 family. As to quaternary structure, monomer and homodimer. Interacts with FBXO7. Interacts with the 20S proteasome.

It is found in the cytoplasm. Its subcellular location is the endoplasmic reticulum. Functionally, plays an important role in control of proteasome function. Inhibits the hydrolysis of protein and peptide substrates by the 20S proteasome. Also inhibits the activation of the proteasome by the proteasome regulatory proteins PA700 and PA28. In Homo sapiens (Human), this protein is Proteasome inhibitor PI31 subunit (PSMF1).